The chain runs to 89 residues: Neurotoxin LmNaTx28 (89 aa).

The signal sequence occupies residues 1-18; it reads MNLPTVLCIIALILGVRS. Residues 20–85 form the LCN-type CS-alpha/beta domain; sequence KNGFFTKLGK…VADSSEKACQ (66 aa). Cystine bridges form between Cys33–Cys57, Cys43–Cys62, Cys47–Cys64, and Cys58–Cys84.

Belongs to the long (4 C-C) scorpion toxin superfamily. Sodium channel inhibitor family. Beta subfamily. Expressed by the venom gland.

It is found in the secreted. Functionally, binds voltage-independently at site-4 of sodium channels (Nav) and shift the voltage of activation toward more negative potentials thereby affecting sodium channel activation and promoting spontaneous and repetitive firing. The sequence is that of Neurotoxin LmNaTx28 from Lychas mucronatus (Chinese swimming scorpion).